Here is a 1026-residue protein sequence, read N- to C-terminus: Beta-galactosidase (1026 aa).

Glutamate 458 functions as the Proton donor in the catalytic mechanism. Glutamate 546 functions as the Nucleophile in the catalytic mechanism.

The protein belongs to the glycosyl hydrolase 2 family.

The catalysed reaction is Hydrolysis of terminal non-reducing beta-D-galactose residues in beta-D-galactosides.. The protein is Beta-galactosidase (lacZ) of Streptococcus thermophilus.